Consider the following 727-residue polypeptide: Pre-B-cell leukemia transcription factor-interacting protein 1 (727 aa).

Positions 1 to 10 (MASCPDSDNS) are enriched in polar residues. The disordered stretch occupies residues 1-135 (MASCPDSDNS…SPHRSLPSSP (135 aa)). Low complexity predominate over residues 39–53 (RAPQSPSRAAAEESA). Ser43 carries the post-translational modification Phosphoserine. Residues 61–70 (TVSQNESSKS) are compositionally biased toward polar residues. Ser130, Ser134, Ser147, Ser148, and Ser149 each carry phosphoserine. Residue Thr153 is modified to Phosphothreonine. 2 coiled-coil regions span residues 269–353 (QNMA…QGAD) and 380–421 (SPGF…SLKE). Residues 488–506 (WKTEHWKHKKEASGREKSW) carry the Nuclear localization signal motif. Disordered regions lie at residues 491 to 568 (EHWK…AKDR) and 701 to 727 (KRSG…HRQG). 3 stretches are compositionally biased toward basic and acidic residues: residues 498–544 (EASG…EPPR), 551–568 (PSGE…AKDR), and 716–727 (GPREEHSPHRQG). A Nuclear localization signal motif is present at residues 696 to 719 (DKALKKRSGKKDKHLQNRVVGPRE).

Interacts with ESR1, PBX1, PBX2 and PBX3. Interacts with TEX11.

The protein localises to the cytoplasm. It localises to the cytoskeleton. It is found in the nucleus. Its function is as follows. Regulator of pre-B-cell leukemia transcription factors (BPXs) function. Inhibits the binding of PBX1-HOX complex to DNA and blocks the transcriptional activity of E2A-PBX1. Tethers estrogen receptor-alpha (ESR1) to microtubules and allows them to influence estrogen receptors-alpha signaling. The polypeptide is Pre-B-cell leukemia transcription factor-interacting protein 1 (PBXIP1) (Bos taurus (Bovine)).